An 807-amino-acid chain; its full sequence is Dynein axonemal intermediate chain 4 (807 aa).

Composition is skewed to polar residues over residues 1-11 and 22-31; these read MHSSPTSTRKQ and PRKSISFINP. Disordered stretches follow at residues 1 to 44 and 300 to 320; these read MHSS…AASN and YSSK…DSES. Residues 32–43 show a composition bias toward low complexity; sequence SKSSAGKGYAAS. The span at 308 to 317 shows a compositional bias: basic and acidic residues; it reads AKDRDPKIQD. 6 WD repeats span residues 493 to 533, 542 to 590, 617 to 657, 661 to 701, 704 to 743, and 749 to 788; these read QSSY…NIPV, KHLG…DCHD, SRQA…QYLE, GHKG…PFLS, PTTY…LDPL, and NPGI…TASD.

As to quaternary structure, part of the multisubunit axonemal dynein complex formed at least of two heavy chains and a number of intermediate and light chains. Associated with axonemal dynein subunits such as, DNAH2, DNAI3, and DYNLT1. Interacts with DYNLT1. As to expression, highly expressed in tissues containing motile cilia, including the trachea, lung, oviduct, and testis.

It localises to the cytoplasm. The protein localises to the cytoskeleton. The protein resides in the flagellum axoneme. Its subcellular location is the cilium axoneme. It is found in the dynein axonemal particle. Plays a critical role in the assembly of axonemal dynein complex, thereby playing a role in ciliary motility. The protein is Dynein axonemal intermediate chain 4 (Dnai4) of Mus musculus (Mouse).